Here is a 368-residue protein sequence, read N- to C-terminus: Phospho-N-acetylmuramoyl-pentapeptide-transferase (368 aa).

A run of 10 helical transmembrane segments spans residues 32–52 (TGGA…WIID), 79–99 (TPTM…VLWA), 102–122 (LNPY…IGFY), 140–160 (TRLL…IRLG), 176–196 (VVVD…VGAG), 207–227 (GLAI…AYLA), 247–267 (LAVL…FNAP), 271–291 (IFMG…IAVA), 296–316 (IVLA…IVQV), and 345–365 (QIVI…LSTL).

It belongs to the glycosyltransferase 4 family. MraY subfamily. The cofactor is Mg(2+).

The protein resides in the cell inner membrane. It catalyses the reaction UDP-N-acetyl-alpha-D-muramoyl-L-alanyl-gamma-D-glutamyl-meso-2,6-diaminopimeloyl-D-alanyl-D-alanine + di-trans,octa-cis-undecaprenyl phosphate = di-trans,octa-cis-undecaprenyl diphospho-N-acetyl-alpha-D-muramoyl-L-alanyl-D-glutamyl-meso-2,6-diaminopimeloyl-D-alanyl-D-alanine + UMP. The protein operates within cell wall biogenesis; peptidoglycan biosynthesis. In terms of biological role, catalyzes the initial step of the lipid cycle reactions in the biosynthesis of the cell wall peptidoglycan: transfers peptidoglycan precursor phospho-MurNAc-pentapeptide from UDP-MurNAc-pentapeptide onto the lipid carrier undecaprenyl phosphate, yielding undecaprenyl-pyrophosphoryl-MurNAc-pentapeptide, known as lipid I. This chain is Phospho-N-acetylmuramoyl-pentapeptide-transferase, found in Nitrobacter hamburgensis (strain DSM 10229 / NCIMB 13809 / X14).